The chain runs to 281 residues: Diaminopimelate epimerase (281 aa).

Substrate is bound by residues Asn-13 and Asn-66. Residue Cys-75 is the Proton donor of the active site. Substrate is bound by residues 76–77 (GN), Asn-164, Asn-197, and 215–216 (ER). Residue Cys-224 is the Proton acceptor of the active site. 225–226 (GT) lines the substrate pocket.

Belongs to the diaminopimelate epimerase family. As to quaternary structure, homodimer.

Its subcellular location is the cytoplasm. The catalysed reaction is (2S,6S)-2,6-diaminopimelate = meso-2,6-diaminopimelate. Its pathway is amino-acid biosynthesis; L-lysine biosynthesis via DAP pathway; DL-2,6-diaminopimelate from LL-2,6-diaminopimelate: step 1/1. Functionally, catalyzes the stereoinversion of LL-2,6-diaminopimelate (L,L-DAP) to meso-diaminopimelate (meso-DAP), a precursor of L-lysine and an essential component of the bacterial peptidoglycan. This chain is Diaminopimelate epimerase, found in Picosynechococcus sp. (strain ATCC 27264 / PCC 7002 / PR-6) (Agmenellum quadruplicatum).